The primary structure comprises 89 residues: Small ribosomal subunit protein uS15 (89 aa).

The protein belongs to the universal ribosomal protein uS15 family. In terms of assembly, part of the 30S ribosomal subunit. Forms a bridge to the 50S subunit in the 70S ribosome, contacting the 23S rRNA.

Its function is as follows. One of the primary rRNA binding proteins, it binds directly to 16S rRNA where it helps nucleate assembly of the platform of the 30S subunit by binding and bridging several RNA helices of the 16S rRNA. In terms of biological role, forms an intersubunit bridge (bridge B4) with the 23S rRNA of the 50S subunit in the ribosome. In Lactobacillus helveticus (strain DPC 4571), this protein is Small ribosomal subunit protein uS15.